The chain runs to 301 residues: 33 kDa chaperonin (301 aa).

2 cysteine pairs are disulfide-bonded: C239–C241 and C272–C275.

The protein belongs to the HSP33 family. Post-translationally, under oxidizing conditions two disulfide bonds are formed involving the reactive cysteines. Under reducing conditions zinc is bound to the reactive cysteines and the protein is inactive.

The protein resides in the cytoplasm. Redox regulated molecular chaperone. Protects both thermally unfolding and oxidatively damaged proteins from irreversible aggregation. Plays an important role in the bacterial defense system toward oxidative stress. The chain is 33 kDa chaperonin from Nostoc punctiforme (strain ATCC 29133 / PCC 73102).